The sequence spans 484 residues: Gasdermin-D (484 aa).

Tyr-37 is subject to Phosphotyrosine. An S-(2-succinyl)cysteine modification is found at Cys-56. Beta stranded transmembrane passes span 91 to 97 and 103 to 108; these read QGSVELA and KIAGGA. Tyr-158 is modified (phosphotyrosine). 2 beta stranded membrane-spanning segments follow: residues 180–186 and 191–197; these read GSGRFSL and CLQGEGQ. Ser-185 carries the phosphoserine modification. Residues Cys-191 and Cys-268 each carry the S-(2-succinyl)cysteine modification. A lipid anchor (S-palmitoyl cysteine) is attached at Cys-191. A linker helix loop region spans residues 277–296; the sequence is VPAEGAFTEDFQGLRAEVET. S-(2-succinyl)cysteine is present on Cys-309. Ser-338 carries O-linked (GlcNAc) serine glycosylation. Cys-467 is modified (S-(2-succinyl)cysteine).

It belongs to the gasdermin family. In terms of assembly, homooligomer; homooligomeric ring-shaped pore complex containing 27-28 subunits when inserted in the membrane. Homooligomerization is promoted by the mTORC1 complex in macrophages. In response to a canonical inflammasome stimulus, such as nigericin, recruited to NLRP3 inflammasone with similar kinetics to that of uncleaved CASP1 precursor. Although this recruitment is also observed in the absence of PYCARD, it is more efficient in its presence. Cleavage at Asp-275 by CASP1 (mature and uncleaved precursor forms), CASP4, CASP5 or CASP8 relieves autoinhibition and is sufficient to initiate pyroptosis. Cleavage by CASP1 and CASP4 is not strictly dependent on the consensus cleavage site on GSDMD but depends on an exosite interface on CASP1 that recognizes and binds the Gasdermin-D, C-terminal (GSDMD-CT) part. Cleavage by CASP8 takes place following inactivation of MAP3K7/TAK1 by Yersinia toxin YopJ. Cleavage at Asp-87 by CASP3 or CASP7 inactivates the ability to mediate pyroptosis, but generates the Gasdermin-D, p13 chain, which translocates to the nucleus and acts as a transcription regulator. Cleavage by papain allergen generates the Gasdermin-D, p40 chain. Post-translationally, palmitoylated at Cys-191 by ZDHHC5 and ZDHHC9 in response to microbial infection and danger signals. Palmitoylation takes place before cleavage by caspases (CASP1, CASP4, CASP5 or CASP8) and is required for membrane translocation and pore formation. Depalmitoylated by LYPLA2. In terms of processing, succination of Cys-191 by the Krebs cycle intermediate fumarate, which leads to S-(2-succinyl)cysteine residues, inhibits processing by caspases, and ability to initiate pyroptosis. Succination modification is catalyzed by a non-enzymatic reaction caused by an accumulation of fumarate. Glycosylated: O-GlcNAcylation by OGT leads to reduced cleavage by CASP4 and decreased LPS-induced endothelial cell pyroptosis. Post-translationally, (Microbial infection) Cleaved and inactivated by Protease 3C from Human enterovirus 71 (EV71), preventing GSDMD-mediated pyroptosis. In terms of processing, (Microbial infection) Cleaved and inactivated by the 3C-like proteinase nsp5 from human coronavirus SARS-CoV-2, preventing GSDMD-mediated pyroptosis. (Microbial infection) Ubiquitinated by S.flexneri IpaH7.8, leading to its degradation by the proteasome. Expressed in the suprabasal cells of esophagus, as well as in the isthmus/neck, pit, and gland of the stomach, suggesting preferential expression in differentiating cells.

It is found in the cytoplasm. The protein localises to the cytosol. Its subcellular location is the inflammasome. It localises to the cell membrane. The protein resides in the secreted. It is found in the mitochondrion membrane. The protein localises to the nucleus. The full-length protein before cleavage is inactive: intramolecular interactions between N- and C-terminal domains mediate autoinhibition in the absence of activation signal. The intrinsic pyroptosis-inducing activity is carried by the released N-terminal moiety (Gasdermin-D, N-terminal) following cleavage by caspases CASP1, CASP4, CASP5 or CASP8. Cleavage at Asp-87 by CASP3 or CASP7 inactivates the ability to mediate pyroptosis. Homooligomerization and pore formation is specifically inhibited by VHH(GSDMD-1) and, to a lesser extent, VHH(GSDMD-2) nanobodies, protecting against excessive pyroptosis. Inhibited by small molecule NU6300, which covalently reacts with Cys-191, thereby preventing palmitoylation and pyroptosis. Functionally, precursor of a pore-forming protein that plays a key role in host defense against pathogen infection and danger signals. This form constitutes the precursor of the pore-forming protein: upon cleavage, the released N-terminal moiety (Gasdermin-D, N-terminal) binds to membranes and forms pores, triggering pyroptosis. In terms of biological role, promotes pyroptosis in response to microbial infection and danger signals. Produced by the cleavage of gasdermin-D by inflammatory caspases CASP1, CASP4 or CASP5 in response to canonical, as well as non-canonical (such as cytosolic LPS) inflammasome activators. After cleavage, moves to the plasma membrane where it strongly binds to inner leaflet lipids, including monophosphorylated phosphatidylinositols, such as phosphatidylinositol 4-phosphate, bisphosphorylated phosphatidylinositols, such as phosphatidylinositol (4,5)-bisphosphate, as well as phosphatidylinositol (3,4,5)-bisphosphate, and more weakly to phosphatidic acid and phosphatidylserine. Homooligomerizes within the membrane and forms pores of 10-15 nanometers (nm) of inner diameter, allowing the release of mature interleukin-1 (IL1B and IL18) and triggering pyroptosis. Gasdermin pores also allow the release of mature caspase-7 (CASP7). In some, but not all, cells types, pyroptosis is followed by pyroptotic cell death, which is caused by downstream activation of ninjurin-1 (NINJ1), which mediates membrane rupture (cytolysis). Also forms pores in the mitochondrial membrane, resulting in release of mitochondrial DNA (mtDNA) into the cytosol. Gasdermin-D, N-terminal released from pyroptotic cells into the extracellular milieu rapidly binds to and kills both Gram-negative and Gram-positive bacteria, without harming neighboring mammalian cells, as it does not disrupt the plasma membrane from the outside due to lipid-binding specificity. Under cell culture conditions, also active against intracellular bacteria, such as Listeria monocytogenes. Also active in response to MAP3K7/TAK1 inactivation by Yersinia toxin YopJ, which triggers cleavage by CASP8 and subsequent activation. Required for mucosal tissue defense against enteric pathogens. Activation of the non-canonical inflammasome in brain endothelial cells can lead to excessive pyroptosis, leading to blood-brain barrier breakdown. Strongly binds to bacterial and mitochondrial lipids, including cardiolipin. Does not bind to unphosphorylated phosphatidylinositol, phosphatidylethanolamine nor phosphatidylcholine. Its function is as follows. Transcription coactivator produced by the cleavage by CASP3 or CASP7 in the upper small intestine in response to dietary antigens. Required to maintain food tolerance in small intestine: translocates to the nucleus and acts as a coactivator for STAT1 to induce the transcription of CIITA and MHC class II molecules, which in turn induce type 1 regulatory T (Tr1) cells in upper small intestine. Produced by the cleavage by papain allergen. After cleavage, moves to the plasma membrane and homooligomerizes within the membrane and forms pores of 10-15 nanometers (nm) of inner diameter, allowing the specific release of mature interleukin-33 (IL33), promoting type 2 inflammatory immune response. The protein is Gasdermin-D of Homo sapiens (Human).